A 393-amino-acid polypeptide reads, in one-letter code: S-adenosylmethionine synthase (393 aa).

His-16 provides a ligand contact to ATP. Asp-18 contributes to the Mg(2+) binding site. Glu-44 provides a ligand contact to K(+). 2 residues coordinate L-methionine: Glu-57 and Gln-100. The tract at residues 100-110 is flexible loop; it reads QSNDIAQGVDQ. ATP contacts are provided by residues 167-169, 238-239, Asp-247, 253-254, Ala-270, and Lys-274; these read DAK, RF, and RK. Asp-247 lines the L-methionine pocket. Lys-278 is an L-methionine binding site.

It belongs to the AdoMet synthase family. As to quaternary structure, homotetramer; dimer of dimers. Mg(2+) is required as a cofactor. Requires K(+) as cofactor.

It localises to the cytoplasm. The enzyme catalyses L-methionine + ATP + H2O = S-adenosyl-L-methionine + phosphate + diphosphate. The protein operates within amino-acid biosynthesis; S-adenosyl-L-methionine biosynthesis; S-adenosyl-L-methionine from L-methionine: step 1/1. Its function is as follows. Catalyzes the formation of S-adenosylmethionine (AdoMet) from methionine and ATP. The overall synthetic reaction is composed of two sequential steps, AdoMet formation and the subsequent tripolyphosphate hydrolysis which occurs prior to release of AdoMet from the enzyme. The sequence is that of S-adenosylmethionine synthase from Methylibium petroleiphilum (strain ATCC BAA-1232 / LMG 22953 / PM1).